Here is a 151-residue protein sequence, read N- to C-terminus: Large ribosomal subunit protein bL9 (151 aa).

Belongs to the bacterial ribosomal protein bL9 family.

Functionally, binds to the 23S rRNA. In Lactobacillus delbrueckii subsp. bulgaricus (strain ATCC BAA-365 / Lb-18), this protein is Large ribosomal subunit protein bL9.